A 210-amino-acid polypeptide reads, in one-letter code: MLTRHCNRLGLQIENKFVFRSSSWNCVRRIGKIACNENKYRYEMTSTEEDIDSFFSRVFGEKNYISDKSLREQIVTHKSYKHGLKRYNEPFVSVGNAVIDVCLLNHYLESGNFSTIPSYKDLVNLRSPARLAEVAKKWNPETATQCILPLKGPNSPSSSSFEKIYSSIVSGLVAVVYFQKGGVEAMNFCKKSIISDLTKDFVRPNTVHNQ.

Residues Met-1–Phe-59 constitute a mitochondrion transit peptide.

Belongs to the ribonuclease III family. Mitochondrion-specific ribosomal protein mL57 subfamily. In terms of assembly, component of the mitochondrial large ribosomal subunit (mt-LSU). Mature yeast 74S mitochondrial ribosomes consist of a small (37S) and a large (54S) subunit. The 37S small subunit contains a 15S ribosomal RNA (15S mt-rRNA) and at least 32 different proteins. The 54S large subunit contains a 21S rRNA (21S mt-rRNA) and at least 45 different proteins. mL57 forms a heterodimer with mL44 and stabilizes rRNA expansion segments 1/2 at a membrane-facing protuberance close to the point of attachment of the ribosome to the translocon in the membrane.

The protein localises to the mitochondrion. Its function is as follows. Component of the mitochondrial ribosome (mitoribosome), a dedicated translation machinery responsible for the synthesis of mitochondrial genome-encoded proteins, including at least some of the essential transmembrane subunits of the mitochondrial respiratory chain. The mitoribosomes are attached to the mitochondrial inner membrane and translation products are cotranslationally integrated into the membrane. This Schizosaccharomyces pombe (strain 972 / ATCC 24843) (Fission yeast) protein is Large ribosomal subunit protein mL57 (mrp15).